The primary structure comprises 251 residues: 4-hydroxy-tetrahydrodipicolinate reductase (251 aa).

NAD(+) contacts are provided by residues Gly8–Met13, Gly76–Thr78, and Ala106–Phe109. His136 serves as the catalytic Proton donor/acceptor. His137 is a (S)-2,3,4,5-tetrahydrodipicolinate binding site. Lys140 serves as the catalytic Proton donor. A (S)-2,3,4,5-tetrahydrodipicolinate-binding site is contributed by Gly146 to Thr147.

The protein belongs to the DapB family.

The protein resides in the cytoplasm. It carries out the reaction (S)-2,3,4,5-tetrahydrodipicolinate + NAD(+) + H2O = (2S,4S)-4-hydroxy-2,3,4,5-tetrahydrodipicolinate + NADH + H(+). It catalyses the reaction (S)-2,3,4,5-tetrahydrodipicolinate + NADP(+) + H2O = (2S,4S)-4-hydroxy-2,3,4,5-tetrahydrodipicolinate + NADPH + H(+). Its pathway is amino-acid biosynthesis; L-lysine biosynthesis via DAP pathway; (S)-tetrahydrodipicolinate from L-aspartate: step 4/4. In terms of biological role, catalyzes the conversion of 4-hydroxy-tetrahydrodipicolinate (HTPA) to tetrahydrodipicolinate. In Bifidobacterium longum subsp. infantis (strain ATCC 15697 / DSM 20088 / JCM 1222 / NCTC 11817 / S12), this protein is 4-hydroxy-tetrahydrodipicolinate reductase.